Consider the following 530-residue polypeptide: MSGNVCNRCNDGLMVNYPFLSCQKCIYLAKKNNKCLGVSIKGKHCPYKPNSNCGNIFCKNHTNQFRLHGKAHTHKLCSSGNDCFREDVTIKNLKQILPIDYPFAQCETCRNNERSYFNNKQQRVKQHNAESKDTMICKKCFVELPTNKFPKTSRGKISHYCKSCFDKRAIIERNRIIDPIKERERSKKYENRPDIKQKRKKYRQCKVVKIRNAISLKKSREKLRAADPENYLKKKAEQQAKHRQKYPEKNGITTIRYNTISSDKYMRYKSVAIEKGLEFTLTKQEFEKLVESNCYYCDCKYKNTINGIDRINNNVGYILDNCVTACSMCNNMKNTLNVETFIVMCMTIANYFKYYRTDIFVNVFNNYESASYNNYKNRALKKDLEFQLSNKEFKELQQKPCYLCGRKSNDKHTNGVDRVCNEEGYIPTNCRSCCGDCNYLKKDYKLDNVVFRCAFIALMHKNNAKKLQDDWKPSRFHESNDKKLSKEENREIKLSIRENKEKQRKKSVEKSVSKLQNQLNRLLNKNTIEV.

The stretch at 485 to 529 (SKEENREIKLSIRENKEKQRKKSVEKSVSKLQNQLNRLLNKNTIE) forms a coiled coil.

This is an uncharacterized protein from Acanthamoeba polyphaga (Amoeba).